Consider the following 513-residue polypeptide: Zinc finger CCCH-type with G patch domain-containing protein (513 aa).

An N-acetylmethionine modification is found at M1. Positions 92–131 are disordered; that stretch reads PVAPGAELETVPSRETGPGPTEPGQEEDDGEDEEGGAALS. Residues 115–126 show a composition bias toward acidic residues; it reads GQEEDDGEDEEG. Residues 176-202 form a C3H1-type zinc finger; it reads KSLKPCPFFLEGKCRFQENCRFSHGQV. Positions 267–298 are disordered; the sequence is LPPLRTDPAGSSDSDGSDADDPSYARVVEPGA. Phosphoserine is present on residues S278 and S355. A G-patch domain is found at 315-361; sequence TRGIGSRLLAKMGYEFGKGLGRRADGRVEPVHAVVLPRGKSLDQCAE. Disordered stretches follow at residues 367 to 394 and 493 to 513; these read TRAGQAGVSKPPKCRSRGSGPGGRPPPR and QEAGLQREQRKADTHKKMTEF. Residues 497–513 show a composition bias toward basic and acidic residues; the sequence is LQREQRKADTHKKMTEF.

In terms of assembly, interacts with CHD4/Mi-2; the interaction is direct.

It localises to the nucleus. Transcription repressor that specifically binds the 5'-GGAG[GA]A[GA]A-3' consensus sequence. Represses transcription by recruiting the chromatin multiprotein complex NuRD to target promoters. Negatively regulates expression of EGFR, a gene involved in cell proliferation, survival and migration. Its ability to repress genes of the EGFR pathway suggest it may act as a tumor suppressor. This chain is Zinc finger CCCH-type with G patch domain-containing protein (ZGPAT), found in Ovis aries (Sheep).